The primary structure comprises 92 residues: Co-chaperonin GroES (92 aa).

This sequence belongs to the GroES chaperonin family. Heptamer of 7 subunits arranged in a ring. Interacts with the chaperonin GroEL.

The protein localises to the cytoplasm. Together with the chaperonin GroEL, plays an essential role in assisting protein folding. The GroEL-GroES system forms a nano-cage that allows encapsulation of the non-native substrate proteins and provides a physical environment optimized to promote and accelerate protein folding. GroES binds to the apical surface of the GroEL ring, thereby capping the opening of the GroEL channel. The chain is Co-chaperonin GroES from Methanosarcina mazei (strain ATCC BAA-159 / DSM 3647 / Goe1 / Go1 / JCM 11833 / OCM 88) (Methanosarcina frisia).